Here is a 225-residue protein sequence, read N- to C-terminus: Sugar fermentation stimulation protein homolog (225 aa).

This sequence belongs to the SfsA family.

In Sulfolobus acidocaldarius (strain ATCC 33909 / DSM 639 / JCM 8929 / NBRC 15157 / NCIMB 11770), this protein is Sugar fermentation stimulation protein homolog.